The chain runs to 1165 residues: Phenyloxazoline synthase MbtB (1165 aa).

The region spanning 5–78 (PARSEDIREE…AWAQLVTAGR (74 aa)) is the Carrier 1 domain. O-(pantetheine 4'-phosphoryl)serine is present on serine 39. Residues 77-100 (GRQDTDSAAPPADSSGDPSGETEP) form a disordered region. Residues 97–393 (ETEPFALAPM…SSLLLDVDLV (297 aa)) are condensation/cyclization. The interval 578-973 (SYAQLRDQAL…RVPGVRTAVA (396 aa)) is adenylation. A Carrier 2 domain is found at 1055–1131 (AASTPLEGAL…ALAAVLRAAE (77 aa)). The residue at position 1090 (serine 1090) is an O-(pantetheine 4'-phosphoryl)serine.

The protein belongs to the ATP-dependent AMP-binding enzyme family. MbtB subfamily. It depends on pantetheine 4'-phosphate as a cofactor. In terms of processing, 4'-phosphopantetheine is transferred from CoA to a specific serine in each of the two carrier protein domains, leading to their activation from apo to holo forms.

Its pathway is siderophore biosynthesis; mycobactin biosynthesis. Its function is as follows. Involved in the initial steps of the mycobactin biosynthetic pathway. Putatively couples activated salicylic acid with serine or threonine and cyclizes this precursor to the hydroxyphenyloxazoline ring system present in this class of siderophores. The polypeptide is Phenyloxazoline synthase MbtB (mbtB) (Mycolicibacterium paratuberculosis (strain ATCC BAA-968 / K-10) (Mycobacterium paratuberculosis)).